A 341-amino-acid chain; its full sequence is tRNA N6-adenosine threonylcarbamoyltransferase (341 aa).

Residues H113 and H117 each coordinate Fe cation. Substrate is bound by residues L141–G145, D174, G187, and N282. Residue D310 coordinates Fe cation.

This sequence belongs to the KAE1 / TsaD family. It depends on Fe(2+) as a cofactor.

Its subcellular location is the cytoplasm. The enzyme catalyses L-threonylcarbamoyladenylate + adenosine(37) in tRNA = N(6)-L-threonylcarbamoyladenosine(37) in tRNA + AMP + H(+). Its function is as follows. Required for the formation of a threonylcarbamoyl group on adenosine at position 37 (t(6)A37) in tRNAs that read codons beginning with adenine. Is involved in the transfer of the threonylcarbamoyl moiety of threonylcarbamoyl-AMP (TC-AMP) to the N6 group of A37, together with TsaE and TsaB. TsaD likely plays a direct catalytic role in this reaction. This chain is tRNA N6-adenosine threonylcarbamoyltransferase, found in Porphyromonas gingivalis (strain ATCC BAA-308 / W83).